A 499-amino-acid polypeptide reads, in one-letter code: Bifunctional purine biosynthesis protein PurH (499 aa).

An MGS-like domain is found at 1–144 (MIKRALISVF…KNFKDVVVLT (144 aa)).

The protein belongs to the PurH family.

It carries out the reaction (6R)-10-formyltetrahydrofolate + 5-amino-1-(5-phospho-beta-D-ribosyl)imidazole-4-carboxamide = 5-formamido-1-(5-phospho-D-ribosyl)imidazole-4-carboxamide + (6S)-5,6,7,8-tetrahydrofolate. It catalyses the reaction IMP + H2O = 5-formamido-1-(5-phospho-D-ribosyl)imidazole-4-carboxamide. It participates in purine metabolism; IMP biosynthesis via de novo pathway; 5-formamido-1-(5-phospho-D-ribosyl)imidazole-4-carboxamide from 5-amino-1-(5-phospho-D-ribosyl)imidazole-4-carboxamide (10-formyl THF route): step 1/1. The protein operates within purine metabolism; IMP biosynthesis via de novo pathway; IMP from 5-formamido-1-(5-phospho-D-ribosyl)imidazole-4-carboxamide: step 1/1. This chain is Bifunctional purine biosynthesis protein PurH, found in Clostridium botulinum (strain 657 / Type Ba4).